The following is a 111-amino-acid chain: Shuttling pre-60S factor C23B6.02c (111 aa).

2 stretches are compositionally biased toward basic residues: residues 1-12 and 59-73; these read MAKKQSIRSRNF and SKKK…KKAK. 2 disordered regions span residues 1 to 25 and 47 to 111; these read MAKK…DSST and ALRS…QGDE. Residues 83-111 are compositionally biased toward basic and acidic residues; that stretch reads QAREERLDTKISKSLQKQEKLKARKQGDE.

It belongs to the ECM1 family. In terms of assembly, associates with the pre-60S ribosomal particle and the nucleopore complex.

The protein resides in the nucleus. Its subcellular location is the nucleolus. It is found in the cytoplasm. Pre-ribosomal factor involved in 60S ribosomal protein subunit export from the nucleus. This Schizosaccharomyces pombe (strain 972 / ATCC 24843) (Fission yeast) protein is Shuttling pre-60S factor C23B6.02c.